The sequence spans 360 residues: Lipid-A-disaccharide synthase (360 aa).

Belongs to the LpxB family.

The enzyme catalyses a lipid X + a UDP-2-N,3-O-bis[(3R)-3-hydroxyacyl]-alpha-D-glucosamine = a lipid A disaccharide + UDP + H(+). The protein operates within bacterial outer membrane biogenesis; LPS lipid A biosynthesis. Condensation of UDP-2,3-diacylglucosamine and 2,3-diacylglucosamine-1-phosphate to form lipid A disaccharide, a precursor of lipid A, a phosphorylated glycolipid that anchors the lipopolysaccharide to the outer membrane of the cell. This Helicobacter pylori (strain Shi470) protein is Lipid-A-disaccharide synthase.